A 497-amino-acid polypeptide reads, in one-letter code: PHD finger protein 10 (497 aa).

Residues 1-61 (MAAAGPGAAL…SSRSCETSSQ (61 aa)) are disordered. Phosphoserine is present on residues serine 11, serine 35, and serine 49. The segment at 88-184 (MLQEQVSEYL…HYKEYSQMQQ (97 aa)) is essential to induce neural progenitor proliferation. The SAY stretch occupies residues 88–294 (MLQEQVSEYL…PPLDPELPAL (207 aa)). A Glycyl lysine isopeptide (Lys-Gly) (interchain with G-Cter in SUMO2) cross-link involves residue lysine 240. A Phosphoserine modification is found at serine 269. A compositionally biased stretch (low complexity) spans 284–295 (EPPLDPELPALD). The disordered stretch occupies residues 284–367 (EPPLDPELPA…KRSVLSKSVP (84 aa)). The interval 291–333 (LPALDSDGDSDDGEDGGGDEKRKNKGTSDSSSGNVSEGDSPPD) is essential to induce neural progenitor proliferation. Residues serine 296, serine 300, serine 326, and serine 330 each carry the phosphoserine modification. Positions 296–307 (SDGDSDDGEDGG) are enriched in acidic residues. A compositionally biased stretch (polar residues) spans 317 to 327 (TSDSSSGNVSE). A compositionally biased stretch (basic and acidic residues) spans 344 to 358 (KSKDKMATPRKDGSK). The PHD-type 1; degenerate zinc finger occupies 378 to 435 (LCGICLKGKESNKKGKAESLIHCSQCDNSGHPSCLDMTMELVSMIKTYPWQCMECKTC). A Glycyl lysine isopeptide (Lys-Gly) (interchain with G-Cter in SUMO2) cross-link involves residue lysine 384. The PHD-type 2; degenerate zinc-finger motif lies at 437–480 (ICGQPHHEEEMMFCDVCDRGYHTFCVGLGAIPSGRWICDCCQRA).

Belongs to the SAYP family. In terms of assembly, component of neural progenitors-specific chromatin remodeling complex (npBAF complex) composed of at least, ARID1A/BAF250A or ARID1B/BAF250B, SMARCD1/BAF60A, SMARCD3/BAF60C, SMARCA2/BRM/BAF190B, SMARCA4/BRG1/BAF190A, SMARCB1/BAF47, SMARCC1/BAF155, SMARCE1/BAF57, SMARCC2/BAF170, PHF10/BAF45A, ACTL6A/BAF53A and actin. Interacts with ACTL6A/BAF53A, SMARCA2/BRM/BAF190B, SMARCA4/BRG1/BAF190A and PBRM1/BAF180.

It localises to the nucleus. Functionally, involved in transcription activity regulation by chromatin remodeling. Belongs to the neural progenitors-specific chromatin remodeling complex (npBAF complex) and is required for the proliferation of neural progenitors. During neural development a switch from a stem/progenitor to a post-mitotic chromatin remodeling mechanism occurs as neurons exit the cell cycle and become committed to their adult state. The transition from proliferating neural stem/progenitor cells to post-mitotic neurons requires a switch in subunit composition of the npBAF and nBAF complexes. As neural progenitors exit mitosis and differentiate into neurons, npBAF complexes which contain ACTL6A/BAF53A and PHF10/BAF45A, are exchanged for homologous alternative ACTL6B/BAF53B and DPF1/BAF45B or DPF3/BAF45C subunits in neuron-specific complexes (nBAF). The npBAF complex is essential for the self-renewal/proliferative capacity of the multipotent neural stem cells. The nBAF complex along with CREST plays a role regulating the activity of genes essential for dendrite growth. The sequence is that of PHD finger protein 10 (Phf10) from Rattus norvegicus (Rat).